The following is a 904-amino-acid chain: Copper-transporting ATPase ccc2 (904 aa).

Residues 1–172 (MYTTTLSVQG…GSQIRVWKIR (172 aa)) lie on the Cytoplasmic side of the membrane. The region spanning 2 to 68 (YTTTLSVQGM…KIEDCGFDAS (67 aa)) is the HMA domain. Cu(+)-binding residues include Cys-13 and Cys-16. A helical transmembrane segment spans residues 173 to 193 (FIISISFSLAVMFLPQIFDSC). Residues 194 to 197 (DSMR) lie on the Lumenal, vesicle side of the membrane. The helical transmembrane segment at 198–218 (AAFLVPHYFGICAGHIISLVL) threads the bilayer. The Cytoplasmic portion of the chain corresponds to 219 to 246 (SLPVQFGVGRVYYSAAYHALKRGTANMD). A helical membrane pass occupies residues 247–267 (VLVSLGSTVAFAASIFFMILY). The Lumenal, vesicle segment spans residues 268–278 (SARHADNPAPI). A helical transmembrane segment spans residues 279 to 296 (FFDTADMLLTFVTLGRYL). Topologically, residues 297–431 (ESKAKGSTSA…PIQQFADRVA (135 aa)) are cytoplasmic. The chain crosses the membrane as a helical span at residues 432–452 (GIFVPVIVALSISTFTFWFLF). The Lumenal, vesicle segment spans residues 453–469 (TKYSSKYPSVFDDPMGK). A helical membrane pass occupies residues 470–490 (FAVCLKLTISVVVVACPCALG). The Cytoplasmic segment spans residues 491 to 805 (LSTPTAVMVG…RIKMNLVWAC (315 aa)). Residue Asp-529 is the 4-aspartylphosphate intermediate of the active site. Residues Asp-742 and Asp-746 each coordinate Mg(2+). A helical membrane pass occupies residues 806–826 (IYNFVMIPIAMGFFLPWGIYL). The Lumenal, vesicle portion of the chain corresponds to 827 to 828 (NP). A helical membrane pass occupies residues 829–849 (MWASAAMMFSSLSVLASSLLL). Over 850–904 (RRWKKPKSLIFSEADDVETESSTNSSVLQKVYTATRSIFGRNKSSNKYQPVANEV) the chain is Cytoplasmic.

This sequence belongs to the cation transport ATPase (P-type) (TC 3.A.3) family. Type IB subfamily.

The protein resides in the golgi apparatus. Its subcellular location is the trans-Golgi network membrane. The catalysed reaction is Cu(+)(in) + ATP + H2O = Cu(+)(out) + ADP + phosphate + H(+). In terms of biological role, probably involved in copper transport and in the regulation of cellular copper level. Retrieves copper from the metallochaperone atx1 and incorporates it into trans-Golgi vesicles. This is Copper-transporting ATPase ccc2 (ccc2) from Schizosaccharomyces pombe (strain 972 / ATCC 24843) (Fission yeast).